The chain runs to 261 residues: Claudin-18 (261 aa).

At 1-6 the chain is on the cytoplasmic side; that stretch reads MSTTTC. Residues 7-27 form a helical membrane-spanning segment; it reads QVVAFLLSILGLAGCIAATGM. Residues 28-80 are Extracellular-facing; it reads DMWSTQDLYDNPVTSVFQYEGLWRSCVRQSSGFTECRPYFTILGLPAMLQAVR. A helical membrane pass occupies residues 81 to 101; sequence ALMIVGIVLGAIGLLVSIFAL. Topologically, residues 102 to 122 are cytoplasmic; sequence KCIRIGSMEDSAKANMTLTSG. The helical transmembrane segment at 123–143 threads the bilayer; that stretch reads IMFIVSGLCAIAGVSVFANML. Residues 144-174 are Extracellular-facing; it reads VTNFWMSTANMYTGMGGMVQTVQTRYTFGAA. Residues 175 to 195 traverse the membrane as a helical segment; sequence LFVGWVAGGLTLIGGVMMCIA. The segment at 195-261 is required for role in regulation of RANKL-induced osteoclast differentiation; it reads ACRGLAPEET…QSYPSKHDYV (67 aa). Topologically, residues 196–261 are cytoplasmic; the sequence is CRGLAPEETN…QSYPSKHDYV (66 aa). Phosphoserine is present on serine 214. Residues 242-261 form a disordered region; the sequence is DGGARTEDEVQSYPSKHDYV.

It belongs to the claudin family. As to quaternary structure, interacts with TJP2/ZO-2. Interacts with TJP1/ZO-1. Interacts with YAP1 (phosphorylated); the interaction sequesters YAP1 away from the nucleus and thereby restricts transcription of YAP1 target genes. Interacts with CLDN19. Expression is restricted to the lung. In terms of tissue distribution, expression is restricted to the stomach mucosa where it is predominantly observed in the epithelial cells of the pit region and the base of the gastric glands including exocrine and endocrine cells (at protein level).

The protein resides in the cell junction. The protein localises to the tight junction. It localises to the cell membrane. It is found in the lateral cell membrane. In terms of biological role, involved in alveolar fluid homeostasis via regulation of alveolar epithelial tight junction composition and therefore ion transport and solute permeability, potentially via downstream regulation of the actin cytoskeleton organization and beta-2-adrenergic signaling. Required for lung alveolarization and maintenance of the paracellular alveolar epithelial barrier. Acts to maintain epithelial progenitor cell proliferation and organ size, via regulation of YAP1 localization away from the nucleus and thereby restriction of YAP1 target gene transcription. Acts as a negative regulator of RANKL-induced osteoclast differentiation, potentially via relocation of TJP2/ZO-2 away from the nucleus, subsequently involved in bone resorption in response to calcium deficiency. Mediates the osteoprotective effects of estrogen, potentially via acting downstream of estrogen signaling independently of RANKL signaling pathways. Its function is as follows. Involved in the maintenance of homeostasis of the alveolar microenvironment via regulation of pH and subsequent T-cell activation in the alveolar space, is therefore indirectly involved in limiting C.neoformans infection. Required for the formation of the gastric paracellular barrier via its role in tight junction formation, thereby involved in the response to gastric acidification. The sequence is that of Claudin-18 (CLDN18) from Homo sapiens (Human).